The chain runs to 159 residues: NADH-quinone oxidoreductase subunit I (159 aa).

4Fe-4S ferredoxin-type domains are found at residues 51 to 80 and 90 to 119; these read RRYENGEERCIACKLCEAICPAQAIVIEAD and TRYDIDMTKCIYCGLCQAACPVDAIVEGPN. Residues Cys-60, Cys-63, Cys-66, Cys-70, Cys-99, Cys-102, Cys-105, and Cys-109 each contribute to the [4Fe-4S] cluster site.

The protein belongs to the complex I 23 kDa subunit family. NDH-1 is composed of 14 different subunits. Subunits NuoA, H, J, K, L, M, N constitute the membrane sector of the complex. The cofactor is [4Fe-4S] cluster.

It localises to the cell inner membrane. It catalyses the reaction a quinone + NADH + 5 H(+)(in) = a quinol + NAD(+) + 4 H(+)(out). In terms of biological role, NDH-1 shuttles electrons from NADH, via FMN and iron-sulfur (Fe-S) centers, to quinones in the respiratory chain. The immediate electron acceptor for the enzyme in this species is believed to be ubiquinone. Couples the redox reaction to proton translocation (for every two electrons transferred, four hydrogen ions are translocated across the cytoplasmic membrane), and thus conserves the redox energy in a proton gradient. This Rickettsia massiliae (strain Mtu5) protein is NADH-quinone oxidoreductase subunit I.